A 91-amino-acid polypeptide reads, in one-letter code: DNA-directed RNA polymerase subunit omega (91 aa).

Belongs to the RNA polymerase subunit omega family. The RNAP catalytic core consists of 2 alpha, 1 beta, 1 beta' and 1 omega subunit. When a sigma factor is associated with the core the holoenzyme is formed, which can initiate transcription.

It carries out the reaction RNA(n) + a ribonucleoside 5'-triphosphate = RNA(n+1) + diphosphate. Promotes RNA polymerase assembly. Latches the N- and C-terminal regions of the beta' subunit thereby facilitating its interaction with the beta and alpha subunits. This chain is DNA-directed RNA polymerase subunit omega, found in Enterobacter sp. (strain 638).